We begin with the raw amino-acid sequence, 356 residues long: D-alanine--D-alanine ligase (356 aa).

An ATP-grasp domain is found at 134-339 (KQLFEHRGLP…YPELITKLIE (206 aa)). An ATP-binding site is contributed by 167 to 222 (NDKLNYPVFVKPANLGSSIGISKCSNEVELKEGIKEAFQFDRKLVIEQGVNAREIE). Positions 293, 306, and 308 each coordinate Mg(2+).

It belongs to the D-alanine--D-alanine ligase family. Mg(2+) is required as a cofactor. Requires Mn(2+) as cofactor.

The protein resides in the cytoplasm. The enzyme catalyses 2 D-alanine + ATP = D-alanyl-D-alanine + ADP + phosphate + H(+). Its pathway is cell wall biogenesis; peptidoglycan biosynthesis. Functionally, cell wall formation. The chain is D-alanine--D-alanine ligase from Staphylococcus aureus (strain MRSA252).